A 544-amino-acid chain; its full sequence is Chaperonin GroEL (544 aa).

ATP-binding positions include 29–32 (TLGP), 86–90 (DGTTT), glycine 413, 476–478 (NAA), and aspartate 492.

The protein belongs to the chaperonin (HSP60) family. As to quaternary structure, forms a cylinder of 14 subunits composed of two heptameric rings stacked back-to-back. Interacts with the co-chaperonin GroES.

The protein resides in the cytoplasm. The enzyme catalyses ATP + H2O + a folded polypeptide = ADP + phosphate + an unfolded polypeptide.. Together with its co-chaperonin GroES, plays an essential role in assisting protein folding. The GroEL-GroES system forms a nano-cage that allows encapsulation of the non-native substrate proteins and provides a physical environment optimized to promote and accelerate protein folding. This chain is Chaperonin GroEL, found in Bacillus licheniformis (strain ATCC 14580 / DSM 13 / JCM 2505 / CCUG 7422 / NBRC 12200 / NCIMB 9375 / NCTC 10341 / NRRL NRS-1264 / Gibson 46).